Reading from the N-terminus, the 443-residue chain is Large ribosomal subunit protein mL50 (443 aa).

The disordered stretch occupies residues 121–145; it reads QPTRADAPEKIRDPNYEPATSGAGL. Residues 126–135 show a composition bias toward basic and acidic residues; that stretch reads DAPEKIRDPN.

This sequence belongs to the mitochondrion-specific ribosomal protein mL50 family. As to quaternary structure, component of the mitochondrial large ribosomal subunit (mt-LSU). Mature N.crassa 74S mitochondrial ribosomes consist of a small (37S) and a large (54S) subunit. The 37S small subunit contains a 16S ribosomal RNA (16S mt-rRNA) and 32 different proteins. The 54S large subunit contains a 23S rRNA (23S mt-rRNA) and 42 different proteins.

The protein resides in the mitochondrion. Component of the mitochondrial ribosome (mitoribosome), a dedicated translation machinery responsible for the synthesis of mitochondrial genome-encoded proteins, including at least some of the essential transmembrane subunits of the mitochondrial respiratory chain. The mitoribosomes are attached to the mitochondrial inner membrane and translation products are cotranslationally integrated into the membrane. The protein is Large ribosomal subunit protein mL50 (mrpl13) of Neurospora crassa (strain ATCC 24698 / 74-OR23-1A / CBS 708.71 / DSM 1257 / FGSC 987).